The primary structure comprises 149 residues: Sperm surface protein Sp17 (149 aa).

Basic and acidic residues predominate over residues 83–96; the sequence is CEQELAKSSGREET. The interval 83 to 114 is disordered; that stretch reads CEQELAKSSGREETPVTPFEESTEEEREQEEA. A compositionally biased stretch (acidic residues) spans 103-113; sequence ESTEEEREQEE. Positions 112-141 constitute an IQ domain; the sequence is EEAAALKIQSLFRGHVAREEVKKMKSDKNE.

Homodimer. May interact with ROPN1. In terms of tissue distribution, testis- and sperm-specific.

It localises to the membrane. Sperm surface zona pellucida binding protein. Helps to bind spermatozoa to the zona pellucida with high affinity. Might function in binding zona pellucida and carbohydrates. The polypeptide is Sperm surface protein Sp17 (Spa17) (Mus musculus (Mouse)).